We begin with the raw amino-acid sequence, 150 residues long: Cytochrome c-type biogenesis protein CcmE (150 aa).

Topologically, residues 1–7 are cytoplasmic; it reads MTRKQKR. Residues 8–28 form a helical; Signal-anchor for type II membrane protein membrane-spanning segment; sequence LAIIGGGVGFLTAAVLLVMFA. Topologically, residues 29–150 are periplasmic; that stretch reads FSQAVAYFYV…VTLGGKENIQ (122 aa). Positions 123 and 127 each coordinate heme.

This sequence belongs to the CcmE/CycJ family.

The protein localises to the cell inner membrane. Heme chaperone required for the biogenesis of c-type cytochromes. Transiently binds heme delivered by CcmC and transfers the heme to apo-cytochromes in a process facilitated by CcmF and CcmH. In Sinorhizobium fredii (strain NBRC 101917 / NGR234), this protein is Cytochrome c-type biogenesis protein CcmE.